The following is a 692-amino-acid chain: DNA-binding protein RFX2 (692 aa).

The segment at 1–26 (MQNSEGGADSPATVALRPAAQPVPAS) is disordered. S26 carries the phosphoserine modification. Positions 169–244 (TLQWLLDNYE…YHYYGIRLKP (76 aa)) form a DNA-binding region, RFX-type winged-helix. Residues 261 to 296 (RQQPTHQKPRYRPAQKSDSLGDGSAHSNMHSTPEQA) form a disordered region. Residues 285–294 (AHSNMHSTPE) are compositionally biased toward polar residues. S386 carries the post-translational modification Phosphoserine. Basic and acidic residues predominate over residues 660–685 (DGHSSEADVDGRSLGEPLVKRERSDP). The disordered stretch occupies residues 660 to 692 (DGHSSEADVDGRSLGEPLVKRERSDPSHPLQGI).

Belongs to the RFX family. As to quaternary structure, homodimer; probably only forms homodimers in testis. Heterodimer; heterodimerizes with RFX1 and RFX3. In terms of tissue distribution, expressed at highest level in testis. Expressed at lower level in thymus. Also expressed in stomach, kidney, liver, brain and heart. Weakly expressed in spleen and lung. Within testis, most abundantly present in spermatocytes: present from pachytene spermatocytes to early spermatids (at protein level). Also present in non-germinal tissues.

It is found in the nucleus. The protein localises to the cytoplasm. In terms of biological role, transcription factor that acts as a key regulator of spermatogenesis. Acts by regulating expression of genes required for the haploid phase during spermiogenesis, such as genes required for cilium assembly and function. Recognizes and binds the X-box, a regulatory motif with DNA sequence 5'-GTNRCC(0-3N)RGYAAC-3' present on promoters. Probably activates transcription of the testis-specific histone gene H1-6. The protein is DNA-binding protein RFX2 (Rfx2) of Rattus norvegicus (Rat).